The following is an 842-amino-acid chain: Pentatricopeptide repeat-containing protein At3g22690 (842 aa).

PPR repeat units lie at residues 98-132 (TCFM…GISP), 133-167 (DKYT…GYAK), 168-202 (DLFV…NVVS), 203-234 (WTSM…EVTP), 235-269 (NSVT…GIEV), 270-300 (NDLM…YGAS), 301-335 (NLDL…GVRP), 336-370 (DRIS…GFES), 371-401 (WDNI…MSNK), 402-436 (TVVT…NIVS), 437-463 (WNTI…MQSQ), 469-503 (DGVT…GIQL), 504-534 (DVRL…LTNR), 535-569 (DVSA…GLKP), 570-605 (DGVA…GVSP), and 606-636 (EDVH…MPME). The segment at 641–716 (IWNSLLAACR…PPGTSSIQIR (76 aa)) is type E motif. Residues 717-747 (GKTHEFTSGDESHPEMPNIEAMLDEVSQRAS) are type E(+) motif. The type DYW motif stretch occupies residues 748 to 842 (HLGHVPDLSN…QGKCSCGDFW (95 aa)).

Belongs to the PPR family. PCMP-H subfamily.

The sequence is that of Pentatricopeptide repeat-containing protein At3g22690 (PCMP-H56) from Arabidopsis thaliana (Mouse-ear cress).